A 412-amino-acid polypeptide reads, in one-letter code: Esterase EstD (412 aa).

Residues 1–20 form the signal peptide; it reads MRLTVFLSLFLGVMVFGAFD. Ser-243 serves as the catalytic Nucleophile. Catalysis depends on charge relay system residues Asp-347 and His-378.

Belongs to the AB hydrolase superfamily. Esterase 10 family. In terms of assembly, exists mainly as a monomer and, to some extent as a dimer.

It catalyses the reaction a carboxylic ester + H2O = an alcohol + a carboxylate + H(+). Its activity is regulated as follows. Is strongly inhibited by phenylmethylsulfonyl fluoride, a serine protease inhibitor, and by mercury chloride. Diethyl pyrocarbonate, a histidine modifier, also inhibits the reaction, albeit less pronounced than phenylmethylsulfonyl fluoride. EDTA and dithiothreitol have no effect on enzyme activity. Exhibits significant esterase activity with a preference for short acyl chain esters (C4-C8) in vitro. Its physiological function is not known. Displays neither proteolytic activity using casein as substrate, nor peptidase activity when assayed with L-leucine p-nitroanilide and L-proline p-nitroanilide. The protein is Esterase EstD of Thermotoga maritima (strain ATCC 43589 / DSM 3109 / JCM 10099 / NBRC 100826 / MSB8).